The primary structure comprises 291 residues: Gamma-sarcoglycan (291 aa).

Topologically, residues 1 to 37 are cytoplasmic; sequence MVREQYTTVTEGTHIERPENQHIYKIGIYGWRKRCLY. The helical; Signal-anchor for type II membrane protein transmembrane segment at 38–58 threads the bilayer; it reads LFVLLLLAILVVNLALTIWIL. Over 59 to 291 the chain is Extracellular; it reads KVMWFSPIGM…TCEEHSHVCL (233 aa). An N-linked (GlcNAc...) asparagine glycan is attached at asparagine 110. Intrachain disulfides connect cysteine 265-cysteine 290 and cysteine 267-cysteine 283.

It belongs to the sarcoglycan beta/delta/gamma/zeta family. In terms of assembly, interacts with the syntrophin SNTA1 and FLNC. Cross-link to form 2 major subcomplexes: one consisting of SGCB, SGCD and SGCG and the other consisting of SGCB and SGCD. The association between SGCB and SGCG is particularly strong while SGCA is loosely associated with the other sarcoglycans. In terms of tissue distribution, most strongly expressed in skeletal and heart muscle. Also detected in proliferating myoblasts.

The protein localises to the cell membrane. It localises to the sarcolemma. The protein resides in the cytoplasm. Its subcellular location is the cytoskeleton. Component of the sarcoglycan complex, a subcomplex of the dystrophin-glycoprotein complex which forms a link between the F-actin cytoskeleton and the extracellular matrix. This chain is Gamma-sarcoglycan (Sgcg), found in Mus musculus (Mouse).